The primary structure comprises 680 residues: Serine/threonine-protein kinase YPK1 (680 aa).

Residues 1–11 (MYSWKSKFKFG) are compositionally biased toward basic residues. The segment at 1–117 (MYSWKSKFKF…GTPNDATSSS (117 aa)) is disordered. Composition is skewed to basic and acidic residues over residues 12–21 (KSKEEKEAKH) and 41–56 (GEHD…DRKG). Phosphothreonine is present on Thr-57. The span at 59 to 71 (NPSNSSVVPVRVS) shows a compositional bias: low complexity. Phosphoserine occurs at positions 61, 64, and 71. Residues 73-83 (DASSSTSTVRD) show a composition bias toward polar residues. The segment covering 84 to 97 (SNGGNSENTNSSQN) has biased composition (low complexity). Residues 98-117 (LDETANIGSTGTPNDATSSS) are compositionally biased toward polar residues. Ser-170 is modified (phosphoserine). In terms of domain architecture, Protein kinase spans 347 to 602 (FDLLKVIGKG…ADEIRNHPFF (256 aa)). Residues 353 to 361 (IGKGSFGKV) and Lys-376 each bind ATP. The Proton acceptor role is filled by Asp-470. Residue Thr-502 is modified to Phosphothreonine. Thr-504 is modified (phosphothreonine; by PKH1). Positions 603-673 (SQLSWKRLLM…VGNEQLGSSM (71 aa)) constitute an AGC-kinase C-terminal domain. Residues Ser-644 and Ser-653 each carry the phosphoserine modification. Thr-662 carries the post-translational modification Phosphothreonine; by PKH1. Residue Ser-671 is modified to Phosphoserine.

This sequence belongs to the protein kinase superfamily. AGC Ser/Thr protein kinase family. RAC subfamily. Autophosphorylated. Phytosphingosine level stimulates phosphorylation by PKH1. The N-terminal half is phosphorylated by FPK1. Phosphorylation is inhibited by exogenous addition of phytosphingosine.

It localises to the cytoplasm. Its subcellular location is the cell membrane. It catalyses the reaction L-seryl-[protein] + ATP = O-phospho-L-seryl-[protein] + ADP + H(+). It carries out the reaction L-threonyl-[protein] + ATP = O-phospho-L-threonyl-[protein] + ADP + H(+). Its activity is regulated as follows. Activated by phytosphingosine (PHS), a sphingoid long chain base. Activated by PKH1 phosphorylation. Plays an essential role in the proliferation of yeast cells. Involved in a signaling pathway, required for optimal cell wall integrity, that acts in parallel with the PKC1-SLT2-dependent pathway. Downstream kinase in the sphingolipid-mediated signaling pathway. Phosphorylation is regulated by the intracellular sphingolipid concentration. Disruption or inhibition of sphingolipid synthesis leads to the activation and phosphorylation of YPK1 through the TORC2 and PKH1 pathways, which in turn phosphorylates ORM1 and LAG1 to activate sphingolipid synthesis. Cooperates with SLI1 in mediating resistance to the sphingolipid biosynthesis inhibitor drug myriocin (ISP-1); kinase activity is essential for the resistance. Required for both receptor-mediated and fluid-phase endocytosis, but is not necessary for receptor phosphorylation or ubiquitination. Necessary for the internalization of plasma membrane proteins carrying different types of internalization signals. Acts downstream of the PKH kinases to control endocytosis by phosphorylating components of the endocytic machinery. Phosphorylation of residue Thr-504 in the activation loop and residue Thr-662 are essential for activity. Phosphorylates and down-regulates flippase activator FPK1. In Saccharomyces cerevisiae (strain ATCC 204508 / S288c) (Baker's yeast), this protein is Serine/threonine-protein kinase YPK1 (YPK1).